Reading from the N-terminus, the 300-residue chain is LysM and putative peptidoglycan-binding domain-containing protein 3 (300 aa).

Over 1–216 the chain is Extracellular; that stretch reads MAGRNQNRTA…PYYGADWGMG (216 aa). N7 and N26 each carry an N-linked (GlcNAc...) asparagine glycan. S55 carries the phosphoserine modification. The region spanning 65–109 is the LysM domain; it reads LTKDIQEGDTLNAVALQYCCTVADIKRVNNLISDQDFFALRSIKI. A disordered region spans residues 136–157; sequence PYFQEQDTVPANDSPSSSESAG. The span at 140–156 shows a compositional bias: polar residues; the sequence is EQDTVPANDSPSSSESA. N-linked (GlcNAc...) asparagine glycosylation occurs at N199. A helical transmembrane segment spans residues 217–237; it reads WWTAVVIMLIVGIITPVFYLL. The Cytoplasmic portion of the chain corresponds to 238–300; the sequence is YYEILAKVDV…LYRQDPQARD (63 aa). Residues 253 to 300 are disordered; the sequence is VDSSHLHPGLTPPSHHREMGNAIGPTKGIPVGQQDDHRLYRQDPQARD. Positions 286 to 300 are enriched in basic and acidic residues; the sequence is QDDHRLYRQDPQARD.

It localises to the cell membrane. Its subcellular location is the golgi apparatus. Its function is as follows. Essential for Golgi structural integrity. The protein is LysM and putative peptidoglycan-binding domain-containing protein 3 (Lysmd3) of Rattus norvegicus (Rat).